A 380-amino-acid polypeptide reads, in one-letter code: Glutamine synthetase, chloroplastic (380 aa).

The GS beta-grasp domain occupies Met35–Gly125. A GS catalytic domain is found at Thr132–Gly380.

The protein belongs to the glutamine synthetase family. As to quaternary structure, homooctamer.

The protein resides in the plastid. The protein localises to the chloroplast. The enzyme catalyses L-glutamate + NH4(+) + ATP = L-glutamine + ADP + phosphate + H(+). The protein is Glutamine synthetase, chloroplastic (GLN2) of Chlamydomonas reinhardtii (Chlamydomonas smithii).